Reading from the N-terminus, the 393-residue chain is Riboflavin biosynthesis protein RibBA (393 aa).

The segment at 1 to 200 (MQFDNIDSAL…IDDLIEYRKK (200 aa)) is DHBP synthase. D-ribulose 5-phosphate contacts are provided by residues 27–28 (RE), D32, 139–143 (RNGHT), and E163. A Mg(2+)-binding site is contributed by E28. H142 is a Mg(2+) binding site. Residues 201–393 (LEPEIEFKAK…TKKIKMGHLI (193 aa)) are GTP cyclohydrolase II. GTP is bound at residue 249–253 (RLHSA). Residues C254, C265, and C267 each coordinate Zn(2+). GTP-binding positions include Q270, 291–293 (EGR), and T313. The Proton acceptor; for GTP cyclohydrolase activity role is filled by D325. Residue R327 is the Nucleophile; for GTP cyclohydrolase activity of the active site. GTP-binding residues include S348 and K353.

In the N-terminal section; belongs to the DHBP synthase family. This sequence in the C-terminal section; belongs to the GTP cyclohydrolase II family. Requires Mg(2+) as cofactor. The cofactor is Mn(2+). Zn(2+) is required as a cofactor.

The enzyme catalyses D-ribulose 5-phosphate = (2S)-2-hydroxy-3-oxobutyl phosphate + formate + H(+). The catalysed reaction is GTP + 4 H2O = 2,5-diamino-6-hydroxy-4-(5-phosphoribosylamino)-pyrimidine + formate + 2 phosphate + 3 H(+). It participates in cofactor biosynthesis; riboflavin biosynthesis; 2-hydroxy-3-oxobutyl phosphate from D-ribulose 5-phosphate: step 1/1. Its pathway is cofactor biosynthesis; riboflavin biosynthesis; 5-amino-6-(D-ribitylamino)uracil from GTP: step 1/4. In terms of biological role, catalyzes the conversion of D-ribulose 5-phosphate to formate and 3,4-dihydroxy-2-butanone 4-phosphate. Its function is as follows. Catalyzes the conversion of GTP to 2,5-diamino-6-ribosylamino-4(3H)-pyrimidinone 5'-phosphate (DARP), formate and pyrophosphate. This chain is Riboflavin biosynthesis protein RibBA, found in Staphylococcus aureus (strain MRSA252).